Consider the following 201-residue polypeptide: Peptide deformylase (201 aa).

Fe cation contacts are provided by Cys-114 and His-156. Glu-157 is an active-site residue. Residue His-160 coordinates Fe cation.

The protein belongs to the polypeptide deformylase family. Fe(2+) is required as a cofactor.

The enzyme catalyses N-terminal N-formyl-L-methionyl-[peptide] + H2O = N-terminal L-methionyl-[peptide] + formate. Removes the formyl group from the N-terminal Met of newly synthesized proteins. Requires at least a dipeptide for an efficient rate of reaction. N-terminal L-methionine is a prerequisite for activity but the enzyme has broad specificity at other positions. The protein is Peptide deformylase of Tropheryma whipplei (strain TW08/27) (Whipple's bacillus).